Here is a 2339-residue protein sequence, read N- to C-terminus: Voltage-dependent N-type calcium channel subunit alpha-1B (2339 aa).

The Cytoplasmic segment spans residues 1-90 (MVRFGDELGG…DNVVRKYAKR (90 aa)). Over residues 15-34 (AGGAERARGGGAGGAGGPGP) the composition is skewed to gly residues. Residues 15–37 (AGGAERARGGGAGGAGGPGPGGL) are disordered. Arg-22 is modified (omega-N-methylarginine). One copy of the I repeat lies at 82–359 (NVVRKYAKRI…LVLGVLSGEF (278 aa)). A helical membrane pass occupies residues 91–114 (ITEWPPFEYMILATIIANCIVLAL). At 115 to 131 (EQHLPDGDKTPMSERLD) the chain is on the extracellular side. A helical membrane pass occupies residues 132–152 (DTEPYFIGIFCFEAGIKILAL). Residues 153-163 (GFVLHKGSYLR) lie on the Cytoplasmic side of the membrane. A helical transmembrane segment spans residues 164 to 182 (NGWNVMDFVVVLTGILATA). At 183-187 (GTDFD) the chain is on the extracellular side. A helical transmembrane segment spans residues 188 to 211 (LRTLRAVRVLRPLKLVSGIPSLQV). Residues 212–221 (VLKSIMKAMV) are Cytoplasmic-facing. A helical membrane pass occupies residues 222–244 (PLLQIGLLLFFAILMFAIIGLEF). The Extracellular portion of the chain corresponds to 245 to 331 (YMGKFHKACF…NTNDAAGNTW (87 aa)). Asn-256 carries an N-linked (GlcNAc...) asparagine glycan. A helical transmembrane segment spans residues 332–356 (NWLYFIPLIIIGSFFMLNLVLGVLS). Over 357–483 (GEFAKERERV…FFIRRMVKAQ (127 aa)) the chain is Cytoplasmic. Residues 379–396 (QQIERELNGYLEWIFKAE) form a binding to the beta subunit region. Ser-411 bears the Phosphoserine mark. Residue 452 to 459 (ASLKSGKT) coordinates ATP. The II repeat unit spans residues 469–713 (EKMFRFFIRR…VFLAIAVDNL (245 aa)). A helical transmembrane segment spans residues 484–502 (SFYWTVLCVVALNTLCVAM). Residues 503 to 512 (VHYNQPQRLT) lie on the Extracellular side of the membrane. A helical transmembrane segment spans residues 513 to 535 (TALYFAEFVFLGLFLTEMSLKMY). Residues 536–545 (GLGPRSYFRS) lie on the Cytoplasmic side of the membrane. Ser-545 contacts a 1,2-diacyl-sn-glycero-3-phospho-(1D-myo-inositol-4,5-bisphosphate). Residues 546-567 (SFNCFDFGVIVGSIFEVVWAAV) form a helical membrane-spanning segment. The Extracellular portion of the chain corresponds to 568–574 (KPGTSFG). Residues 575–587 (ISVLRALRLLRIF) traverse the membrane as a helical segment. A 1,2-diacyl-sn-glycero-3-phospho-(1D-myo-inositol-4,5-bisphosphate) contacts are provided by Arg-585 and Lys-588. Over 588–605 (KVTKYWNSLRNLVVSLLN) the chain is Cytoplasmic. The helical transmembrane segment at 606–631 (SMKSIISLLFLLFLFIVVFALLGMQL) threads the bilayer. Over 632 to 683 (FGGQFNFKDETPTTNFDTFPAAILTVFQILTGEDWNAVMYHGIESQGGVSRG) the chain is Extracellular. A helical membrane pass occupies residues 684–710 (MFSSFYFIVLTLFGNYTLLNVFLAIAV). The Cytoplasmic segment spans residues 711–1156 (DNLANAQELT…CCHYIVTMRY (446 aa)). Phosphoserine occurs at positions 746, 749, and 784. Composition is skewed to basic and acidic residues over residues 809–827 (DVKTHLDRPLVVEPGRDAP), 870–891 (EQDRAEALRAEGGELGPREERG), 927–937 (GSPEEAAEREP), 973–984 (CPREAESSEEPA), and 999–1026 (TAEKDKEAAEKGGEATEAEKDKEARNHQ). Disordered regions lie at residues 809-1026 (DVKT…RNHQ) and 1056-1084 (VEEQPEDADNQRNVTRMGSQPPDTSTTVH). A compositionally biased stretch (polar residues) spans 1066–1083 (QRNVTRMGSQPPDTSTTV). Ser-1074 is modified (phosphoserine). Residues 1142–1424 (NLLRRCCHYI…IFVALIIITF (283 aa)) form an III repeat. A helical membrane pass occupies residues 1157-1175 (FEMVILVVIALSSIALAAE). Over 1176–1183 (DPVRTDSP) the chain is Extracellular. Residues 1184–1208 (RNNALKYMDYIFTGVFTFEMVIKMI) form a helical membrane-spanning segment. Residues 1209–1222 (DLGLLLHPGAYFRD) lie on the Cytoplasmic side of the membrane. The helical transmembrane segment at 1223–1243 (LWNILDFIVVSGALVAFAFSG) threads the bilayer. Residues 1244-1249 (SKGKDI) lie on the Extracellular side of the membrane. A helical membrane pass occupies residues 1250–1270 (STIKSLRVLRVLRPLKTIKRL). Topologically, residues 1271–1288 (PKLKAVFDCVVNSLKNVL) are cytoplasmic. Residues 1289–1308 (NILIVYMLFMFIFAVIAVQL) form a helical membrane-spanning segment. The Extracellular portion of the chain corresponds to 1309 to 1395 (FKGKFFYCTD…EQGPSPGYRM (87 aa)). The chain crosses the membrane as a helical span at residues 1396–1421 (ELSIFYVVYFVVFPFFFVNIFVALII). Topologically, residues 1422 to 1476 (ITFQEQGDKVMSECSLEKNERACIDFAISARPLTRYMPQNKQSFQYKTWTFVVSP) are cytoplasmic. The IV repeat unit spans residues 1461 to 1714 (NKQSFQYKTW…LFVAVIMDNF (254 aa)). Residues 1477-1495 (PFEYFIMAMIALNTVVLMM) form a helical membrane-spanning segment. Residues 1496-1503 (KFYDAPYE) are Extracellular-facing. A helical transmembrane segment spans residues 1504 to 1528 (YELMLKCLNIVFTSMFSMECVLKII). At 1529 to 1538 (AFGVLNYFRD) the chain is on the cytoplasmic side. Residues 1539–1560 (AWNVFDFVTVLGSITDILVTEI) traverse the membrane as a helical segment. Topologically, residues 1561-1566 (ANNFIN) are extracellular. An N-linked (GlcNAc...) asparagine glycan is attached at Asn-1566. A helical membrane pass occupies residues 1567 to 1585 (LSFLRLFRAARLIKLLRQG). Topologically, residues 1586-1604 (YTIRILLWTFVQSFKALPY) are cytoplasmic. A helical membrane pass occupies residues 1605–1624 (VCLLIAMLFFIYAIIGMQVF). The Extracellular portion of the chain corresponds to 1625-1686 (GNIALDDDTS…SNASECGSDF (62 aa)). A glycan (N-linked (GlcNAc...) asparagine) is linked at Asn-1678. The chain crosses the membrane as a helical span at residues 1687-1710 (AYFYFVSFIFLCSFLMLNLFVAVI). The Cytoplasmic portion of the chain corresponds to 1711-2339 (MDNFEYLTRD…CHHPDRDRRC (629 aa)). Residues 1727–1762 (HHLDEFIRVWAEYDPAACGRISYSDMFEMLKHMSPP) enclose the EF-hand domain. Ca(2+) is bound by residues Asp-1740, Arg-1746, and Asp-1751. The tract at residues 1983-2312 (TLSGPDAEPQ…QPPPLRRVPN (330 aa)) is disordered. Positions 2050-2064 (PHHHHHRCHRRRDRK) are enriched in basic residues. Ser-2067 is subject to Phosphoserine. The span at 2099–2136 (CRRERERRQERGRSQERRQPSSSSSEKHRFYSCDRFGG) shows a compositional bias: basic and acidic residues. Polar residues-rich tracts occupy residues 2144 to 2155 (PSLSSHPTSPTA) and 2165 to 2181 (GSGSVHGSPLLSTSGAS). Residues Ser-2224, Ser-2233, and Ser-2256 each carry the phosphoserine modification. Residues 2286–2302 (SNSGRSSRTSYVSSLTS) are compositionally biased toward low complexity.

Belongs to the calcium channel alpha-1 subunit (TC 1.A.1.11) family. CACNA1B subfamily. In terms of assembly, multisubunit complex consisting of alpha-1, alpha-2, beta and delta subunits in a 1:1:1:1 ratio. The channel activity is directed by the pore-forming and voltage-sensitive alpha-1 subunit. In many cases, this subunit is sufficient to generate voltage-sensitive calcium channel activity. The auxiliary subunits beta and alpha-2/delta linked by a disulfide bridge regulate the channel activity. Interacts with RIMS1. Interacts with FMR1 (via C-terminus); this interaction induces a decrease in the number of presynaptic functional CACNA1B channels at the cell surface. Phosphorylated in vitro by CaM-kinase II, PKA, PKC and CGPK. In terms of tissue distribution, widespread expression throughout the brain. Highest levels in corpus striatum and midbrain.

It localises to the membrane. It carries out the reaction Ca(2+)(in) = Ca(2+)(out). Its activity is regulated as follows. Is specifically blocked by omega-conotoxin GVIA. Is specifically blocked by omega-conotoxin MVIIA (ziconotide). Is insensitive to dihydropyridines (DHP). Its function is as follows. Voltage-sensitive calcium channels (VSCC) mediate the entry of calcium ions into excitable cells and are also involved in a variety of calcium-dependent processes, including muscle contraction, hormone or neurotransmitter release, gene expression, cell motility, cell division and cell death. This alpha-1B subunit gives rise to N-type calcium currents. N-type calcium channels belong to the 'high-voltage activated' (HVA) group. They are involved in pain signaling. Calcium channels containing alpha-1B subunit may play a role in directed migration of immature neurons. Mediates Ca(2+) release probability at hippocampal neuronal soma and synaptic terminals. The sequence is that of Voltage-dependent N-type calcium channel subunit alpha-1B (CACNA1B) from Oryctolagus cuniculus (Rabbit).